Reading from the N-terminus, the 287-residue chain is Pyridoxal kinase PdxY (287 aa).

Residues Ser9 and 44 to 45 contribute to the substrate site; that span reads MQ. Positions 111, 142, 147, and 180 each coordinate ATP. Asp221 is a binding site for substrate.

This sequence belongs to the pyridoxine kinase family. PdxY subfamily. As to quaternary structure, homodimer. Mg(2+) serves as cofactor.

The enzyme catalyses pyridoxal + ATP = pyridoxal 5'-phosphate + ADP + H(+). It functions in the pathway cofactor metabolism; pyridoxal 5'-phosphate salvage; pyridoxal 5'-phosphate from pyridoxal: step 1/1. Its function is as follows. Pyridoxal kinase involved in the salvage pathway of pyridoxal 5'-phosphate (PLP). Catalyzes the phosphorylation of pyridoxal to PLP. The protein is Pyridoxal kinase PdxY of Burkholderia pseudomallei (strain K96243).